The primary structure comprises 62 residues: MARYRHSRSRSRSRYRRRRRRRSRYRSRRRRYRGRRRRRSRRGRRRRGYSRRRYSRRRRRRY.

The tract at residues 1 to 62 is disordered; that stretch reads MARYRHSRSR…RYSRRRRRRY (62 aa).

The protein belongs to the protamine P1 family. In terms of tissue distribution, testis.

It localises to the nucleus. It is found in the chromosome. Functionally, protamines substitute for histones in the chromatin of sperm during the haploid phase of spermatogenesis. They compact sperm DNA into a highly condensed, stable and inactive complex. The protein is Sperm protamine P1 (PRM1) of Wallabia bicolor (Swamp wallaby).